We begin with the raw amino-acid sequence, 312 residues long: Polyhedral envelope protein (312 aa).

Belongs to the baculoviridae PE family.

It is found in the virion membrane. Major component of the polyhedra envelope. The protein is Polyhedral envelope protein of Lymantria dispar multicapsid nuclear polyhedrosis virus (LdMNPV).